A 100-amino-acid chain; its full sequence is Large ribosomal subunit protein uL23 (100 aa).

It belongs to the universal ribosomal protein uL23 family. In terms of assembly, part of the 50S ribosomal subunit. Contacts protein L29, and trigger factor when it is bound to the ribosome.

Its function is as follows. One of the early assembly proteins it binds 23S rRNA. One of the proteins that surrounds the polypeptide exit tunnel on the outside of the ribosome. Forms the main docking site for trigger factor binding to the ribosome. This Prochlorococcus marinus (strain MIT 9313) protein is Large ribosomal subunit protein uL23.